The primary structure comprises 196 residues: dTTP/UTP pyrophosphatase (196 aa).

Catalysis depends on Asp76, which acts as the Proton acceptor.

It belongs to the Maf family. YhdE subfamily. A divalent metal cation serves as cofactor.

The protein resides in the cytoplasm. The catalysed reaction is dTTP + H2O = dTMP + diphosphate + H(+). It catalyses the reaction UTP + H2O = UMP + diphosphate + H(+). Nucleoside triphosphate pyrophosphatase that hydrolyzes dTTP and UTP. May have a dual role in cell division arrest and in preventing the incorporation of modified nucleotides into cellular nucleic acids. This is dTTP/UTP pyrophosphatase from Chlorobium chlorochromatii (strain CaD3).